Reading from the N-terminus, the 341-residue chain is Protein arginine N-methyltransferase 1 (341 aa).

The SAM-dependent MTase PRMT-type domain maps to Ala-20–Arg-315. S-adenosyl-L-methionine contacts are provided by His-33, Arg-42, Gly-66, Asp-88, and Glu-117. Active-site residues include Glu-132 and Glu-141.

This sequence belongs to the class I-like SAM-binding methyltransferase superfamily. Protein arginine N-methyltransferase family.

It localises to the nucleus. The protein localises to the cytoplasm. Its subcellular location is the cytosol. It catalyses the reaction L-arginyl-[protein] + 2 S-adenosyl-L-methionine = N(omega),N(omega)-dimethyl-L-arginyl-[protein] + 2 S-adenosyl-L-homocysteine + 2 H(+). The catalysed reaction is L-arginyl-[protein] + S-adenosyl-L-methionine = N(omega)-methyl-L-arginyl-[protein] + S-adenosyl-L-homocysteine + H(+). Functionally, arginine methyltransferase that methylates the guanidino nitrogens of arginyl residues present in proteins such as ribonucleoproteins and histones. This chain is Protein arginine N-methyltransferase 1 (prmt1), found in Dictyostelium discoideum (Social amoeba).